Reading from the N-terminus, the 233-residue chain is Nickel import system ATP-binding protein NikE (233 aa).

Residues 2–228 (IELKHVTFGY…DRHPYTKELV (227 aa)) enclose the ABC transporter domain. 35–42 (GESGCGKS) is an ATP binding site.

It belongs to the ABC transporter superfamily. As to quaternary structure, the complex is composed of two ATP-binding proteins (NikD and NikE), two transmembrane proteins (NikB and NikC) and a solute-binding protein (NikA).

The protein localises to the cell membrane. The enzyme catalyses Ni(2+)(out) + ATP + H2O = Ni(2+)(in) + ADP + phosphate + H(+). Its function is as follows. Part of the ABC transporter complex NikABCDE (Opp2) involved in nickel import. Probably responsible for energy coupling to the transport system. The chain is Nickel import system ATP-binding protein NikE from Staphylococcus aureus (strain MSSA476).